A 191-amino-acid polypeptide reads, in one-letter code: Methylated-DNA--protein-cysteine methyltransferase (191 aa).

Tyrosine 120 and arginine 134 together coordinate DNA. Cysteine 151 serves as the catalytic Nucleophile; methyl group acceptor.

The protein belongs to the MGMT family.

The protein resides in the nucleus. The enzyme catalyses a 6-O-methyl-2'-deoxyguanosine in DNA + L-cysteinyl-[protein] = S-methyl-L-cysteinyl-[protein] + a 2'-deoxyguanosine in DNA. It catalyses the reaction a 4-O-methyl-thymidine in DNA + L-cysteinyl-[protein] = a thymidine in DNA + S-methyl-L-cysteinyl-[protein]. In terms of biological role, involved in the cellular defense against the biological effects of O6-methylguanine (O6-MeG) and O4-methylthymine (O4-MeT) in DNA. Repairs the methylated nucleobase in DNA by stoichiometrically transferring the methyl group to a cysteine residue in the enzyme. This is a suicide reaction: the enzyme is irreversibly inactivated. The sequence is that of Methylated-DNA--protein-cysteine methyltransferase (MGT1) from Debaryomyces hansenii (strain ATCC 36239 / CBS 767 / BCRC 21394 / JCM 1990 / NBRC 0083 / IGC 2968) (Yeast).